The sequence spans 89 residues: Small ribosomal subunit protein uS15 (89 aa).

This sequence belongs to the universal ribosomal protein uS15 family. In terms of assembly, part of the 30S ribosomal subunit. Forms a bridge to the 50S subunit in the 70S ribosome, contacting the 23S rRNA.

Functionally, one of the primary rRNA binding proteins, it binds directly to 16S rRNA where it helps nucleate assembly of the platform of the 30S subunit by binding and bridging several RNA helices of the 16S rRNA. Forms an intersubunit bridge (bridge B4) with the 23S rRNA of the 50S subunit in the ribosome. The sequence is that of Small ribosomal subunit protein uS15 from Corynebacterium urealyticum (strain ATCC 43042 / DSM 7109).